Consider the following 156-residue polypeptide: RNA polymerase sigma factor SigS (156 aa).

The Polymerase core binding motif lies at 29 to 44 (EYYQLLLIKMWQLSQI). The H-T-H motif DNA-binding region spans 126–145 (QFEIAEIMSLSLSTIKLIKM).

It belongs to the sigma-70 factor family.

Its function is as follows. Sigma factors are initiation factors that promote the attachment of RNA polymerase to specific initiation sites and are then released. Sigma-S contributes to the protection against external stress, thus playing a role in cellular fitness and survival. This Staphylococcus aureus (strain COL) protein is RNA polymerase sigma factor SigS (sigS).